Consider the following 67-residue polypeptide: Cell division protein ZapB (67 aa).

Residues 3–59 (LELLSQLETKIQTALETIELLKLELDEEKEKAANLAEQNHQLKQELSSWNDKITGLV) are a coiled coil.

It belongs to the ZapB family. As to quaternary structure, homodimer. The ends of the coiled-coil dimer bind to each other, forming polymers. Interacts with FtsZ.

The protein resides in the cytoplasm. Functionally, non-essential, abundant cell division factor that is required for proper Z-ring formation. It is recruited early to the divisome by direct interaction with FtsZ, stimulating Z-ring assembly and thereby promoting cell division earlier in the cell cycle. Its recruitment to the Z-ring requires functional FtsA or ZipA. This chain is Cell division protein ZapB, found in Shewanella amazonensis (strain ATCC BAA-1098 / SB2B).